Here is a 306-residue protein sequence, read N- to C-terminus: MVRRIGVLMGGLSAEREVSLRSGRAVCAALESRGYEVVPIDVNRDVARTVRETGIELAFIALHGPLGEDGAVQGLLEVLGIPYTGSGVLASALAMDKIATKKILAHAGLPVPEYRELEAGDADSARAVVAELGLPVVVKAPTQGSSIGVYIVEREEDLEARITDAVAYGGTRVLVEKFIAGPELTAAVLGNREPRVLPLIEIVSATGKYDYESKYTPGLSDHLIPPRVPREVQERVSDLALRAYRALGCRGFARVDLIVSGNEAFILEINTIPGLTDVSLFPDAARAAGMSFPDLVEHLVRLAQER.

Residues 101 to 301 (KKILAHAGLP…FPDLVEHLVR (201 aa)) enclose the ATP-grasp domain. 129–185 (VAELGLPVVVKAPTQGSSIGVYIVEREEDLEARITDAVAYGGTRVLVEKFIAGPELT) serves as a coordination point for ATP. Mg(2+) contacts are provided by Asp-256, Glu-268, and Asn-270.

Belongs to the D-alanine--D-alanine ligase family. Mg(2+) is required as a cofactor. The cofactor is Mn(2+).

The protein localises to the cytoplasm. The enzyme catalyses 2 D-alanine + ATP = D-alanyl-D-alanine + ADP + phosphate + H(+). It functions in the pathway cell wall biogenesis; peptidoglycan biosynthesis. Its function is as follows. Cell wall formation. The chain is D-alanine--D-alanine ligase from Desulforudis audaxviator (strain MP104C).